Reading from the N-terminus, the 840-residue chain is Phosphatidylglycerol lysyltransferase (840 aa).

The Cytoplasmic portion of the chain corresponds to 1-8; sequence MNQEVKNK. Residues 9–29 traverse the membrane as a helical segment; that stretch reads IFSILKITFATALFIFVVITL. Residues 30–52 lie on the Extracellular side of the membrane; sequence YRELSGINFKDTLVEFSKINRMS. Residues 53–73 traverse the membrane as a helical segment; it reads LVLLFIGGGASLVILSMYDVI. Over 74 to 89 the chain is Cytoplasmic; that stretch reads LSRALKMDISLGKVLR. The chain crosses the membrane as a helical span at residues 90–110; the sequence is VSYIINALNAIVGFGGFIGAG. Over 111–128 the chain is Extracellular; that stretch reads VRAMVYKNYTHDKKKLVH. The chain crosses the membrane as a helical span at residues 129-149; sequence FISLILISMLTGLSLLSLLIV. At 150 to 161 the chain is on the cytoplasmic side; that stretch reads FHVFDASLILNK. The chain crosses the membrane as a helical span at residues 162–182; sequence ITWVRWVLYAVSLFLPLFIIY. The Extracellular segment spans residues 183 to 200; that stretch reads SMVRPPDKNNRYVGLYCT. Residues 201 to 221 traverse the membrane as a helical segment; it reads LVSCVEWLAAAVVLYFCGVIV. Topologically, residues 222 to 229 are cytoplasmic; the sequence is DVHVSFMS. A helical membrane pass occupies residues 230–250; the sequence is FIAIFIIAALSGLVSFIPGGF. Over 251 to 271 the chain is Extracellular; the sequence is GAFDLVVLLGFKTLGVPEEKV. The helical transmembrane segment at 272-292 threads the bilayer; the sequence is LLMLLLYRFAYYFVPVIIALI. Residues 293–337 are Cytoplasmic-facing; it reads LSSFEFGTSAKKYIEGSKYFIPAKDVTSFLMSYQKDIIAKIPSLS. Residues 338–358 traverse the membrane as a helical segment; it reads LAILVFFTSMIFFVNNLTIVY. The Extracellular portion of the chain corresponds to 359–369; the sequence is DALYDGNHLTY. Residues 370 to 390 traverse the membrane as a helical segment; it reads YLLLAIHTSACLLLLLNVVGI. At 391–394 the chain is on the cytoplasmic side; the sequence is YKQS. Helical transmembrane passes span 395 to 415 and 416 to 436; these read RRAIIYAMISIILIIVATLFT and YASYILITWLVIIFALLIVAF. The Cytoplasmic segment spans residues 437 to 450; sequence RRARRLKRPIRMRN. The helical transmembrane segment at 451-471 threads the bilayer; that stretch reads LVAMLLFSIFILYINHIFIAG. Topologically, residues 472-489 are extracellular; it reads TFYALDVYTIEMHTSVLK. A helical membrane pass occupies residues 490–510; the sequence is YYFWITILIIAIIVGAIAWLF. Residues 511 to 840 are Cytoplasmic-facing; it reads DYQFSKVRIS…SKVMRVIRHK (330 aa).

The protein belongs to the LPG synthase family.

It is found in the cell membrane. It carries out the reaction L-lysyl-tRNA(Lys) + a 1,2-diacyl-sn-glycero-3-phospho-(1'-sn-glycerol) = a 1,2-diacyl-sn-glycero-3-phospho-1'-(3'-O-L-lysyl)-sn-glycerol + tRNA(Lys). Functionally, catalyzes the transfer of a lysyl group from L-lysyl-tRNA(Lys) to membrane-bound phosphatidylglycerol (PG), which produces lysylphosphatidylglycerol (LPG), a major component of the bacterial membrane with a positive net charge. LPG synthesis contributes to bacterial virulence as it is involved in the resistance mechanism against cationic antimicrobial peptides (CAMP) produces by the host's immune system (defensins, cathelicidins) and by the competing microorganisms (bacteriocins). In fact, the modification of anionic phosphatidylglycerol with positively charged L-lysine results in repulsion of the peptides. In Staphylococcus aureus (strain MRSA252), this protein is Phosphatidylglycerol lysyltransferase (mprF).